The following is a 617-amino-acid chain: KIF-binding protein (617 aa).

The interval 48 to 83 (ALLGPAPEDEDEPAADDGPGDQALGAGEPREAEGPG) is disordered. The segment covering 54–66 (PEDEDEPAADDGP) has biased composition (acidic residues). Position 174 is a phosphoserine (serine 174).

The protein belongs to the KIF-binding protein family. In terms of assembly, interacts with KIF1B; positively regulates KIF1B microtubule motor activity. Interacts with STMN2. In the embryo it is expressed in cortical neurons; expression increases during neuronal development.

It localises to the cytoplasm. The protein resides in the cytoskeleton. Activator of KIF1B plus-end-directed microtubule motor activity. Required for organization of axonal microtubules, and axonal outgrowth and maintenance during peripheral and central nervous system development. The polypeptide is KIF-binding protein (Mus musculus (Mouse)).